We begin with the raw amino-acid sequence, 139 residues long: Tetra-peptide repeat homeobox-like protein (139 aa).

Disordered stretches follow at residues 1-22 and 78-139; these read MQDP…RQRQ and ERWF…QQPQ. Positions 20–79 form a DNA-binding region, homeobox; sequence QRQDRTIYNWKQQEVLENHFKEEQYPDYDTRQELAEMLNLREYQVQVWFKNRRAKRSRER. Residues 82 to 139 show a composition bias toward low complexity; sequence QKQLQQLQKHPQQQHPQQQHPQQQLQQQQPQQQPQQQQPQQQPQQQQPQQQQLHQQPQ.

This sequence belongs to the paired homeobox family.

The protein resides in the nucleus. Transcription factor required for zygotic genome activation (ZGA), a critical event in early embryonic development during which the developmental control passes from maternally provided mRNAs to the expression of the zygotic genome after fertilization. Protein produced from maternal transcripts that binds and activates expression of key ZGA marker genes, such as NANOGNB, ZSCAN4, DUXB, KLF5 and DPPA3. Binds to regulatory DNA sequences containing a 5'-TAATCC-3' sequence motif. This chain is Tetra-peptide repeat homeobox-like protein, found in Homo sapiens (Human).